We begin with the raw amino-acid sequence, 707 residues long: Complement C1r-A subcomponent (707 aa).

The N-terminal stretch at 1–16 is a signal peptide; it reads MWLFALLVTLFYGVEG. Residues 17–140 form the CUB 1 domain; that stretch reads SIYLPQKLYG…KGFLAYYQAV (124 aa). The Ca(2+) site is built by Glu-65, Asp-73, and Asp-118. Cys-70 and Cys-88 are oxidised to a cystine. The N-linked (GlcNAc...) asparagine glycan is linked to Asn-124. Residues Asp-141, Leu-142, and Glu-144 each contribute to the Ca(2+) site. The EGF-like; calcium-binding domain maps to 141–189; sequence DLDECASQPNSVEEGLQPRCQHLCHNYVGGYFCSCHPGYELQKDGQSCQ. 4 disulfides stabilise this stretch: Cys-145-Cys-164, Cys-160-Cys-173, Cys-175-Cys-188, and Cys-192-Cys-219. Ca(2+) is bound by residues Asn-166, Tyr-167, and Gly-170. Asn-166 carries the post-translational modification (3R)-3-hydroxyasparagine. The CUB 2 domain occupies 192–304; it reads CSSELYTEPS…RGWKLHYTTE (113 aa). Ser-205 carries the phosphoserine; by CK2 modification. The N-linked (GlcNAc...) asparagine glycan is linked to Asn-220. Residues Asp-242, Asp-252, Asp-289, and Asp-293 each coordinate Ca(2+). Cys-249 and Cys-267 are oxidised to a cystine. Sushi domains follow at residues 306–372 and 373–448; these read IKCP…RCKI and KNCG…RCLP. 5 disulfide bridges follow: Cys-308–Cys-357, Cys-337–Cys-370, Cys-375–Cys-428, Cys-405–Cys-446, and Cys-450–Cys-579. Residues 463–704 form the Peptidase S1 domain; sequence IIRGQPARPG…YVDWIKKEMG (242 aa). Active-site charge relay system residues include His-501 and Asp-559. Asn-583 carries N-linked (GlcNAc...) asparagine glycosylation. 2 cysteine pairs are disulfide-bonded: Cys-622–Cys-641 and Cys-652–Cys-682. Ser-656 (charge relay system) is an active-site residue.

This sequence belongs to the peptidase S1 family. In terms of assembly, core component of the complement C1 complex, a calcium-dependent complex composed of 1 molecule of the C1Q subcomplex, 2 molecules of C1R and 2 molecules of C1S. The C1Q subcomplex is composed 18 subunits: 3 chains of C1QA, C1QB, and C1QC trimerize to form 6 collagen-like triple helices connected to six globular ligand-recognition modules. Within the C1 complex, C1R is a dimer of identical chains, each of which is activated by cleavage into two chains, heavy and light, connected by disulfide bonds. Post-translationally, cleaved and activated by autocatalytic processing to generate Complement C1r subcomponent heavy and light chains that are connected by disulfide bonds. The iron and 2-oxoglutarate dependent 3-hydroxylation of aspartate and asparagine is (R) stereospecific within EGF domains.

It localises to the secreted. It is found in the cell surface. The catalysed reaction is Selective cleavage of Lys(or Arg)-|-Ile bond in complement subcomponent C1s to form the active form of C1s (EC 3.4.21.42).. Activated by the C1Q subcomplex of the C1 complex following C1Q binding to immunoglobulins (IgG or IgM) complexed with antigens to form antigen-antibody complexes on the surface of pathogens. Immunoglobulin-binding promotes autoactivation of C1R, which results in the cleavage of the Arg-Ile bond in the catalytic domain. Functionally, serine protease component of the complement C1 complex, a multiprotein complex that initiates the classical pathway of the complement system, a cascade of proteins that leads to phagocytosis and breakdown of pathogens and signaling that strengthens the adaptive immune system. C1R catalyzes the first enzymatic step in the classical complement pathway: it is activated by the C1Q subcomplex of the C1 complex, which associates with IgG or IgM immunoglobulins complexed with antigens to form antigen-antibody complexes on the surface of pathogens. Immunoglobulin-binding promotes the autocatalytic cleavage and activation of C1R. Activated C1R then cleaves and activates C1S, the second protease of the classical complement pathway. It is unclear if C1R activates C1S within single, strained C1 complexes or between neighboring C1 complexes on surfaces. This chain is Complement C1r-A subcomponent (C1ra), found in Mus musculus (Mouse).